Consider the following 337-residue polypeptide: Fructose-1,6-bisphosphatase class 1 (337 aa).

Mg(2+)-binding residues include E94, D116, L118, and D119. Substrate is bound by residues 119-122 (DGSS), N210, and K276. A Mg(2+)-binding site is contributed by E282.

It belongs to the FBPase class 1 family. As to quaternary structure, homotetramer. The cofactor is Mg(2+).

The protein resides in the cytoplasm. The catalysed reaction is beta-D-fructose 1,6-bisphosphate + H2O = beta-D-fructose 6-phosphate + phosphate. Its pathway is carbohydrate biosynthesis; gluconeogenesis. The protein is Fructose-1,6-bisphosphatase class 1 of Burkholderia cenocepacia (strain HI2424).